Here is a 203-residue protein sequence, read N- to C-terminus: Meiotically up-regulated protein PB17E12.09 (203 aa).

Residues 92–177 (CNRKIEGYIK…KEMQLYMTKI (86 aa)) adopt a coiled-coil conformation.

It localises to the cytoplasm. Has a role in meiosis and sporulation. The sequence is that of Meiotically up-regulated protein PB17E12.09 from Schizosaccharomyces pombe (strain 972 / ATCC 24843) (Fission yeast).